We begin with the raw amino-acid sequence, 257 residues long: GTP cyclohydrolase III (257 aa).

Belongs to the archaeal-type GTP cyclohydrolase family.

It catalyses the reaction GTP + 3 H2O = 2-amino-5-formylamino-6-(5-phospho-D-ribosylamino)pyrimidin-4(3H)-one + 2 phosphate + 2 H(+). In terms of biological role, catalyzes the formation of 2-amino-5-formylamino-6-ribofuranosylamino-4(3H)-pyrimidinone ribonucleotide monophosphate and inorganic phosphate from GTP. Also has an independent pyrophosphate phosphohydrolase activity. The chain is GTP cyclohydrolase III from Halorubrum lacusprofundi (strain ATCC 49239 / DSM 5036 / JCM 8891 / ACAM 34).